The following is a 401-amino-acid chain: Coenzyme A biosynthesis bifunctional protein CoaBC (401 aa).

A phosphopantothenoylcysteine decarboxylase region spans residues 1–190 (MQTLAGKKIL…FQPKPLQDKS (190 aa)). Cys-159 functions as the Proton donor in the catalytic mechanism. The phosphopantothenate--cysteine ligase stretch occupies residues 191–401 (ILITAGPTRE…LKQIQTLMGH (211 aa)). Residues Asp-279, Lys-289, 307–310 (PDIV), Phe-326, Lys-340, and Lys-344 contribute to the CTP site.

The protein in the N-terminal section; belongs to the HFCD (homo-oligomeric flavin containing Cys decarboxylase) superfamily. It in the C-terminal section; belongs to the PPC synthetase family. Requires Mg(2+) as cofactor. FMN serves as cofactor.

It catalyses the reaction N-[(R)-4-phosphopantothenoyl]-L-cysteine + H(+) = (R)-4'-phosphopantetheine + CO2. It carries out the reaction (R)-4'-phosphopantothenate + L-cysteine + CTP = N-[(R)-4-phosphopantothenoyl]-L-cysteine + CMP + diphosphate + H(+). It participates in cofactor biosynthesis; coenzyme A biosynthesis; CoA from (R)-pantothenate: step 2/5. It functions in the pathway cofactor biosynthesis; coenzyme A biosynthesis; CoA from (R)-pantothenate: step 3/5. Its function is as follows. Catalyzes two sequential steps in the biosynthesis of coenzyme A. In the first step cysteine is conjugated to 4'-phosphopantothenate to form 4-phosphopantothenoylcysteine. In the second step the latter compound is decarboxylated to form 4'-phosphopantotheine. This is Coenzyme A biosynthesis bifunctional protein CoaBC from Vibrio vulnificus (strain CMCP6).